A 104-amino-acid polypeptide reads, in one-letter code: L-rhamnose mutarotase (104 aa).

Tyrosine 18 serves as a coordination point for substrate. Histidine 22 (proton donor) is an active-site residue. Residues tyrosine 41 and 76-77 (WW) contribute to the substrate site.

This sequence belongs to the rhamnose mutarotase family. As to quaternary structure, homodimer.

It localises to the cytoplasm. The catalysed reaction is alpha-L-rhamnose = beta-L-rhamnose. It functions in the pathway carbohydrate metabolism; L-rhamnose metabolism. Its function is as follows. Involved in the anomeric conversion of L-rhamnose. This Sinorhizobium medicae (strain WSM419) (Ensifer medicae) protein is L-rhamnose mutarotase.